The following is a 782-amino-acid chain: MAPSAWAICWLLGGLLLHGGSSGPSPGPSVPRLRLSYRDLLSANRSAIFLGPQGSLNLQAMYLDEYRDRLFLGGLDALYSLRLDQAWPDPREVLWPPQPGQREECVRKGRDPLTECANFVRVLQPHNRTHLLACGTGAFQPTCALITVGHRGEHVLHLEPGSVESGRGRCPHEPSRPFASTFIDGELYTGLTADFLGREAMIFRSGGPRPALRSDSDQSLLHDPRFVMAARIPENSDQDNDKVYFFFSETVPSPDGGSNHVTVSRVGRVCVNDAGGQRVLVNKWSTFLKARLVCSVPGPGGAETHFDQLEDVFLLWPKAGKSLEVYALFSTVSAVFQGFAVCVYHMADIWEVFNGPFAHRDGPQHQWGPYGGKVPFPRPGVCPSKMTAQPGRPFGSTKDYPDEVLQFARAHPLMFWPVRPRHGRPVLVKTHLAQQLHQIVVDRVEAEDGTYDVIFLGTDSGSVLKVIALQAGGSAEPEEVVLEELQVFKVPTPITEMEISVKRQMLYVGSRLGVAQLRLHQCETYGTACAECCLARDPYCAWDGASCTHYRPSLGKRRFRRQDIRHGNPALQCLGQSQEEEAVGLVAATMVYGTEHNSTFLECLPKSPQAAVRWLLQRPGDEGPDQVKTDERVLHTERGLLFRRLSRFDAGTYTCTTLEHGFSQTVVRLALVVIVASQLDNLFPPEPKPEEPPARGGLASTPPKAWYKDILQLIGFANLPRVDEYCERVWCRGTTECSGCFRSRSRGKQARGKSWAGLELGKKMKSRVHAEHNRTPREVEAT.

An N-terminal signal peptide occupies residues 1 to 22 (MAPSAWAICWLLGGLLLHGGSS). The Sema domain maps to 32 to 519 (RLRLSYRDLL…SRLGVAQLRL (488 aa)). An N-linked (GlcNAc...) asparagine glycan is attached at N44. A disulfide bond links C105 and C116. N127 carries N-linked (GlcNAc...) asparagine glycosylation. 5 cysteine pairs are disulfide-bonded: C134–C143, C270–C382, C294–C342, C522–C540, and C603–C655. An Ig-like C2-type domain is found at 569-671 (PALQCLGQSQ…FSQTVVRLAL (103 aa)).

This sequence belongs to the semaphorin family.

It is found in the secreted. In terms of biological role, has chemorepulsive activities for sympathetic axons. Ligand of NRP2. The sequence is that of Semaphorin-3G (SEMA3G) from Homo sapiens (Human).